The following is a 193-amino-acid chain: Peptidyl-tRNA hydrolase (193 aa).

Tyr16 serves as a coordination point for tRNA. His21 acts as the Proton acceptor in catalysis. Positions 67, 69, and 115 each coordinate tRNA.

Belongs to the PTH family. Monomer.

Its subcellular location is the cytoplasm. The catalysed reaction is an N-acyl-L-alpha-aminoacyl-tRNA + H2O = an N-acyl-L-amino acid + a tRNA + H(+). Functionally, hydrolyzes ribosome-free peptidyl-tRNAs (with 1 or more amino acids incorporated), which drop off the ribosome during protein synthesis, or as a result of ribosome stalling. Its function is as follows. Catalyzes the release of premature peptidyl moieties from peptidyl-tRNA molecules trapped in stalled 50S ribosomal subunits, and thus maintains levels of free tRNAs and 50S ribosomes. This Baumannia cicadellinicola subsp. Homalodisca coagulata protein is Peptidyl-tRNA hydrolase.